A 490-amino-acid polypeptide reads, in one-letter code: MSDVQVHQLYIHGRYVEATSGKTFNSINPANGEIIATLQQASEQDIEAAVKSAQQGQKIWAAMTAMERSRILRRAVDILRERNDELARLETLDTGKAYSETSTVDIVTGADVLEYYAGLATAIQGEQVPLRESSFFYTRREPLGVVAGIGAWNYPIQIALWKSAPALAAGNAMIFKPSETTPLTALKLAEIYTEAGLPDGVFNVVQGAGREIGQWLTEHPVIEKISFTGGVETGKKVMASAAGSTLKEVTMELGGKSPLIICEDADLNRAADIAVMANFFSSGQVCTNGTRVFVPKSRLADFEKAVVERVKRILIGDPMAEDTNFGPLTSFPHMEKVLSFIESGKQQGAKVLIGGGRATEGELAKGAYVLPTVFSDCTDQMAIVQEEIFGPVMSILGYETEEEVIQRANDTTFGLAAGVVTQDISRAHRIIHQIEAGICWINTWGESPAEMPVGGYKQSGVGRENGLTTLGHYTRIKSIQVELGDYQGIF.

K(+)-binding residues include serine 26, isoleucine 27, and aspartate 93. 150–152 contacts NAD(+); it reads GAW. The active-site Charge relay system is the lysine 162. NAD(+)-binding positions include 176–179 and 230–233; these read KPSE and GVET. Leucine 246 contributes to the K(+) binding site. The active-site Proton acceptor is the glutamate 252. NAD(+)-binding residues include glycine 254, cysteine 286, and glutamate 387. Cysteine 286 (nucleophile) is an active-site residue. Position 286 is a cysteine sulfenic acid (-SOH) (cysteine 286). Lysine 457 and glycine 460 together coordinate K(+). Glutamate 464 acts as the Charge relay system in catalysis.

Belongs to the aldehyde dehydrogenase family. Dimer of dimers. K(+) serves as cofactor.

It carries out the reaction betaine aldehyde + NAD(+) + H2O = glycine betaine + NADH + 2 H(+). It participates in amine and polyamine biosynthesis; betaine biosynthesis via choline pathway; betaine from betaine aldehyde: step 1/1. Involved in the biosynthesis of the osmoprotectant glycine betaine. Catalyzes the irreversible oxidation of betaine aldehyde to the corresponding acid. This is Betaine aldehyde dehydrogenase from Acinetobacter baumannii (strain SDF).